The chain runs to 1503 residues: Transient receptor potential cation channel subfamily M member 2 (1503 aa).

A disordered region spans residues 1 to 20 (MEPSALRKAGSEQEEGFEGL). Residues 1 to 752 (MEPSALRKAG…WWGQLSVDNG (752 aa)) are Cytoplasmic-facing. Thr174, Asn179, Arg302, Gly333, and Thr336 together coordinate ADP-D-ribose. Position 740 is a phosphothreonine (Thr740). The stretch at 753–769 (LWRVTLCMLAFPLLLTG) is an intramembrane region. Topologically, residues 770-795 (LISFREKRLQDVGTPAARARAFFTAP) are cytoplasmic. Residues 796-816 (VVVFHLNILSYFAFLCLFAYV) form a helical membrane-spanning segment. The Extracellular portion of the chain corresponds to 817 to 827 (LMVDFQPVPSW). Residues 828 to 848 (CECAIYLWLFSLVCEEMRQLF) form a helical membrane-spanning segment. Residues Glu843 and Gln846 each contribute to the Ca(2+) site. Residues 849 to 867 (YDPDECGLMKKAALYFSDF) lie on the Cytoplasmic side of the membrane. The helical transmembrane segment at 868 to 888 (WNKLDVGAILLFVAGLTCRLI) threads the bilayer. Position 869 (Asn869) interacts with Ca(2+). Residues 889-896 (PATLYPGR) lie on the Extracellular side of the membrane. Residues 897–917 (VILSLDFILFCLRLMHIFTIS) form a helical membrane-spanning segment. Over 918 to 929 (KTLGPKIIIVKR) the chain is Cytoplasmic. A helical membrane pass occupies residues 930 to 950 (MMKDVFFFLFLLAVWVVSFGV). The Extracellular segment spans residues 951 to 970 (AKQAILIHNERRVDWLFRGA). Positions 971–985 (VYHSYLTIFGQIPGY) form an intramembrane region, pore-forming. The Selectivity filter signature appears at 979 to 982 (FGQI). Residues 986–1022 (IDGVNFNPEHCSPNGTDPYKPKCPESDATQQRPAFPE) are Extracellular-facing. Cys996 and Cys1008 are joined by a disulfide. The chain crosses the membrane as a helical span at residues 1023–1044 (WLTVLLLCLYLLFTNILLLNLL). Over 1045-1079 (IAMFNYTFQQVQEHTDQIWKFQRHDLIEEYHGRPA) the chain is Cytoplasmic. Glu1073 provides a ligand contact to Ca(2+). The stretch at 1080 to 1098 (APPPFILLSHLQLFIKRVV) is an intramembrane region. Over 1099–1503 (LKTPAKRHKQ…KAAAEFGAHY (405 aa)) the chain is Cytoplasmic. A disordered region spans residues 1206–1237 (EADVPTLASQKAAEEPDAEPGGRKKTEEPGDS). Residues 1354 to 1498 (RWRRNEDGAI…KTLLQKAAAE (145 aa)) form the Nudix hydrolase domain. Residues Leu1381 and Ser1382 each contribute to the ADP-D-ribose site. The Nudix box motif lies at 1390 to 1411 (GSREPGEMLPRKLKRILRQEHW). ADP-D-ribose contacts are provided by Asp1431, Arg1433, Tyr1485, and Asn1487.

It belongs to the transient receptor (TC 1.A.4) family. LTrpC subfamily. TRPM2 sub-subfamily. Homotetramer. Isoform 1 can interact with isoform 3. This interaction decreases Ca(2+) influx through isoform 1 and suppresses susceptibility to oxidative stress-induced cell death. Phosphorylation of TRPM2 at Thr-740 by protein kinase C (PKC) counteracts the effect of cytosolic Ca(2+) and elevates the temperature threshold. Highly expressed in brain and peripheral blood cells, such as neutrophils. Also detected in bone marrow, spleen, heart, liver and lung. Isoform 2 is found in neutrophil granulocytes.

It is found in the cell membrane. It localises to the perikaryon. The protein localises to the cell projection. The protein resides in the cytoplasmic vesicle. Its subcellular location is the lysosome. It carries out the reaction Ca(2+)(in) = Ca(2+)(out). The catalysed reaction is Na(+)(in) = Na(+)(out). With respect to regulation, activated by intracellular ADP-ribose, beta-NAD (NAD(+)) and similar compounds, and by oxidative stress caused by reactive oxygen or nitrogen species. Ca(2+) and PI(4,5)P2 are required for channel opening by ADP-ribose. Activation by ADP-ribose and beta-NAD is strongly increased by moderate heat (35 to 40 degrees Celsius). Likewise, reactive oxygen species lower the threshold for activation by moderate heat (37 degrees Celsius). Activated by moderate heat (35 to 40 degrees Celsius). Inactivated by exposure to extracellular pH between 4.0 and 6.5; irreversibly inactivated when open channels are exposed to extracellular pH between 4.0 and 6.5, while pre-exposure of closed channels to extracellular pH 5.5 gives rise to currents that rapidly inactivate, but protects against irreversible inactivation. Inactivated by intracellular ATP. Activated by arachidonic acid. Inhibited by 2-aminoethyl diphenylborinate (2-APB). Nonselective, voltage-independent cation channel that mediates Na(+) and Ca(2+) influx, leading to increased cytoplasmic Ca(2+) levels. Functions as a ligand-gated ion channel, gated by intracellular adenosine diphosphate ribose (ADP-ribose), Ca(2+), warm temperature, and oxidative stress. The precise physiological activators are under debate; the true, physiological activators may be ADP-ribose and ADP-ribose-2'-phosphate. Binding of ADP-ribose to the cytoplasmic Nudix domain causes a conformation change; the channel is primed but still requires Ca(2+) binding to trigger channel opening. Extracellular Ca(2+) passes through the channel and increases channel activity. Contributes to Ca(2+) release from intracellular stores in response to ADP-ribose. Plays a role in numerous processes that involve signaling via intracellular Ca(2+) levels. Besides, mediates the release of lysosomal Zn(2+) stores in response to reactive oxygen species, leading to increased cytosolic Zn(2+) levels. Plays a role in mediating behavorial and physiological responses to moderate heat and thereby contributes to body temperature homeostasis. Plays a role in insulin secretion, a process that requires increased cytoplasmic Ca(2+) levels. Required for normal IFNG and cytokine secretion and normal innate immune immunity in response to bacterial infection. Required for normal phagocytosis and cytokine release by macrophages exposed to zymosan (in vitro). Plays a role in dendritic cell differentiation and maturation, and in dendritic cell chemotaxis via its role in regulating cytoplasmic Ca(2+) levels. Plays a role in the regulation of the reorganization of the actin cytoskeleton and filopodia formation in response to reactive oxygen species via its role in increasing cytoplasmic Ca(2+) and Zn(2+) levels. Confers susceptibility to cell death following oxidative stress. In terms of biological role, lacks cation channel activity. Does not mediate cation transport in response to oxidative stress or ADP-ribose. Functionally, lacks cation channel activity and negatively regulates the channel activity of isoform 1. Negatively regulates susceptibility to cell death in reposponse to oxidative stress. The sequence is that of Transient receptor potential cation channel subfamily M member 2 (TRPM2) from Homo sapiens (Human).